Here is a 180-residue protein sequence, read N- to C-terminus: NADH-quinone oxidoreductase subunit I (180 aa).

4Fe-4S ferredoxin-type domains follow at residues 48 to 80 and 90 to 119; these read IVLT…LQKA and EFFR…LTPD. Positions 60, 63, 66, 70, 99, 102, 105, and 109 each coordinate [4Fe-4S] cluster.

Belongs to the complex I 23 kDa subunit family. As to quaternary structure, NDH-1 is composed of 13 different subunits. Subunits NuoA, H, J, K, L, M, N constitute the membrane sector of the complex. It depends on [4Fe-4S] cluster as a cofactor.

It is found in the cell inner membrane. The enzyme catalyses a quinone + NADH + 5 H(+)(in) = a quinol + NAD(+) + 4 H(+)(out). Its function is as follows. NDH-1 shuttles electrons from NADH, via FMN and iron-sulfur (Fe-S) centers, to quinones in the respiratory chain. The immediate electron acceptor for the enzyme in this species is believed to be ubiquinone. Couples the redox reaction to proton translocation (for every two electrons transferred, four hydrogen ions are translocated across the cytoplasmic membrane), and thus conserves the redox energy in a proton gradient. The polypeptide is NADH-quinone oxidoreductase subunit I (Erwinia tasmaniensis (strain DSM 17950 / CFBP 7177 / CIP 109463 / NCPPB 4357 / Et1/99)).